The following is a 157-amino-acid chain: UPF0262 protein Rleg2_0240 (157 aa).

This sequence belongs to the UPF0262 family.

The polypeptide is UPF0262 protein Rleg2_0240 (Rhizobium leguminosarum bv. trifolii (strain WSM2304)).